Here is a 551-residue protein sequence, read N- to C-terminus: MIKRVLTALAATLLPLGAHAADAITGAVQRQPTNWQAIVMFLIFVALTLYITYWASKRVRSRSDYYTAGGNITGFQNGLAIAGDFMSAASFLGISALVYTSGYDGLIYSLGFLVGWPIILFLIAERLRNLGRYTFADVASYRLKQGPIRTLSACGSLVVVALYLIAQMVGAGKLIQLLFGLNYHVAVVLVGVLMVLYVLFGGMLATTWVQIIKAVLLLCGASFMAFMVMKHVGFSFNNLFTEAMAVHPKGAAIMSPGGLVKDPISALSLGLGLMFGTAGLPHILMRFFTVSDAKEARKSVFYATGFMGYFYILTFIIGFGAIMLVGANPAFKDAAGQLIGGNNMAAVHLADAVGGNLFLGFISAVAFATILAVVAGLTLAGASAVSHDLYANVFRKGATERQELKVSKITVLILGVVAILLGILFENQNIAFMVGLAFSIAASCNFPIILLSMYWSKLTTRGAMVGGWLGLLTAVILMILGPTIWVQILGHEKALFPYEYPALFSIAIAFIGIWVFSATDNSPEGMREREQFRAQFIRSQTGIGIERGQAH.

The next 14 membrane-spanning stretches (helical) occupy residues 8–28, 35–55, 78–98, 105–125, 151–171, 185–205, 208–228, 264–284, 305–325, 357–377, 406–426, 430–450, 465–485, and 496–516; these read ALAA…TGAV, WQAI…TYWA, GLAI…SALV, GLIY…LIAE, LSAC…MVGA, VAVV…GMLA, WVQI…AFMV, ISAL…PHIL, GFMG…IMLV, LFLG…VAGL, VSKI…ILFE, IAFM…PIIL, VGGW…PTIW, and FPYE…IWVF.

This sequence belongs to the sodium:solute symporter (SSF) (TC 2.A.21) family.

It is found in the cell inner membrane. Functionally, transports acetate. The chain is Cation/acetate symporter ActP from Klebsiella pneumoniae (strain 342).